Reading from the N-terminus, the 900-residue chain is MAASVDNRQYSTLNGVVRSFTPNNTYLHDPKPSFPAVNLDLDASSSDDDDEKDDASILKDLIRKGNAEIESSVLDPRDQGTADNWISRNSSMVRLTGKHPFNSEPPLPRLMHHGFITPVPLHYVRNHGPVPKARWDDWTVEVTGLVKTPTRFSMDRLVRDFPSRELPVTLVCAGNRRKEQNMVRQSIGFNWGSAGVSTSVWRGVSLRHILRRCRIQTRSRGALHVCFEGDEDLPGGGGSKYSTSIRREVAMDPSRDVILAYMQNGEVLAPDHGFPVRVIIPGFIGGRMVKWLKRIVVTEEECDGHYHYKDNRVLPSHVDAELANEEGWWYKPEYIINELNINSVITTPCHDEILPINAWTTQRPYTLRGYSYSGGGRKVTRVEVTLDGGETWFVCALDQQEKPNKYGKYWCWCFWSLEVEVLDLLGTKEIAVRAWDEALNTQPENLIWNVMGMMNNCWFRVKTNVCKPHKGEIGIVFEHPTQPGNQPGGWMAKEKHLEISQQDSRPILKKSVSSPFMNTFTKMYSLSEVKKHNSPDSAWIIVHGHVYDCTRFLKDHPGGADSILINAGTDCTEEFEAIHSDKAKKMLEDYRVGELITTGYTSDSSSPNNSLHGNSEFKHLAPIKEITTMSLPPLPRRKVALIPREKIPCKLISRTSISHDVRVFRFALPSEDQQLGLPVGKHIFLCATVDGKLCMRAYTPTSGVDEVGYFELVVKVYFKGVHPKFPNGGAMSQHLDSLPIGSDLDVKGPLGHIEYTGRGNFLVHGKHRFAKKLAMLAGGTGITPIYQVAQAILKDPEDHTKMYVVYANRTEDDILLREELDTWAKKYEDRFKVWYVVETAKEGWGYSVGFVTEGVMREHLPEAGDDALALACGPPPMIQFAVNPNLEKMGYDVKNDLLVF.

Cys172 is a Mo-molybdopterin binding site. Positions 521–596 constitute a Cytochrome b5 heme-binding domain; that stretch reads TKMYSLSEVK…LEDYRVGELI (76 aa). Positions 556 and 579 each coordinate heme. The FAD-binding FR-type domain maps to 644-756; it reads REKIPCKLIS…KGPLGHIEYT (113 aa). FAD contacts are provided by residues 696 to 699, 713 to 717, Phe718, Phe725, 730 to 732, and Thr783; these read RAYT, VVKVY, and AMS.

This sequence belongs to the nitrate reductase family. In terms of assembly, homodimer. Requires FAD as cofactor. Heme serves as cofactor. Mo-molybdopterin is required as a cofactor.

The enzyme catalyses nitrite + NAD(+) + H2O = nitrate + NADH + H(+). Nitrate reductase is a key enzyme involved in the first step of nitrate assimilation in plants, fungi and bacteria. The protein is Nitrate reductase [NADH] (NIA) of Lotus japonicus (Lotus corniculatus var. japonicus).